Reading from the N-terminus, the 144-residue chain is UPF0735 ACT domain-containing protein LCABL_12100 (144 aa).

The 76-residue stretch at 68-143 folds into the ACT domain; sequence VISLMLHHDR…GVSDVHLVSV (76 aa).

This sequence belongs to the UPF0735 family.

This Lacticaseibacillus casei (strain BL23) (Lactobacillus casei) protein is UPF0735 ACT domain-containing protein LCABL_12100.